We begin with the raw amino-acid sequence, 248 residues long: Ubiquinone biosynthesis O-methyltransferase (248 aa).

Residues Arg40, Gly71, Asp92, and Met135 each contribute to the S-adenosyl-L-methionine site.

It belongs to the methyltransferase superfamily. UbiG/COQ3 family.

The catalysed reaction is a 3-demethylubiquinol + S-adenosyl-L-methionine = a ubiquinol + S-adenosyl-L-homocysteine + H(+). It carries out the reaction a 3-(all-trans-polyprenyl)benzene-1,2-diol + S-adenosyl-L-methionine = a 2-methoxy-6-(all-trans-polyprenyl)phenol + S-adenosyl-L-homocysteine + H(+). It participates in cofactor biosynthesis; ubiquinone biosynthesis. Functionally, O-methyltransferase that catalyzes the 2 O-methylation steps in the ubiquinone biosynthetic pathway. This Roseobacter denitrificans (strain ATCC 33942 / OCh 114) (Erythrobacter sp. (strain OCh 114)) protein is Ubiquinone biosynthesis O-methyltransferase.